An 84-amino-acid chain; its full sequence is Small ribosomal subunit protein uS17 (84 aa).

It belongs to the universal ribosomal protein uS17 family. As to quaternary structure, part of the 30S ribosomal subunit.

One of the primary rRNA binding proteins, it binds specifically to the 5'-end of 16S ribosomal RNA. This chain is Small ribosomal subunit protein uS17, found in Serratia proteamaculans (strain 568).